An 87-amino-acid polypeptide reads, in one-letter code: Small ribosomal subunit protein bS20 (87 aa).

Residues 1–10 are compositionally biased toward basic residues; the sequence is MANIKSKQKR. The segment at 1–27 is disordered; the sequence is MANIKSKQKRILTNEKSRQRNKSVRSA.

Belongs to the bacterial ribosomal protein bS20 family.

Its function is as follows. Binds directly to 16S ribosomal RNA. This Corynebacterium aurimucosum (strain ATCC 700975 / DSM 44827 / CIP 107346 / CN-1) (Corynebacterium nigricans) protein is Small ribosomal subunit protein bS20.